We begin with the raw amino-acid sequence, 262 residues long: Ribosome-recycling factor, mitochondrial (262 aa).

The N-terminal 55 residues, 1–55, are a transit peptide targeting the mitochondrion; sequence MASGIRCFRLLHPAFRSYHAALTRPVSEVSMKTVSGRQHGHRQYSAYPAVPVRHF.

Belongs to the RRF family.

The protein localises to the mitochondrion. In terms of biological role, responsible for the disassembly of ribosomes from messenger RNA at the termination of mitochondrial protein biosynthesis. Acts in collaboration with GFM2. Promotes mitochondrial ribosome recycling by dissolution of intersubunit contacts. This chain is Ribosome-recycling factor, mitochondrial (Mrrf), found in Mus musculus (Mouse).